The sequence spans 795 residues: Phenylalanine--tRNA ligase beta subunit (795 aa).

A tRNA-binding domain is found at 39–148 (AGSFHGVVVG…ADAPIGTDIR (110 aa)). One can recognise a B5 domain in the interval 401–476 (PKRATITLRR…RVYGYNNIPD (76 aa)). Residues Asp-454, Asp-460, Glu-463, and Glu-464 each coordinate Mg(2+). Positions 701-794 (SRFPANRRDI…LKERFQASLR (94 aa)) constitute an FDX-ACB domain.

This sequence belongs to the phenylalanyl-tRNA synthetase beta subunit family. Type 1 subfamily. Tetramer of two alpha and two beta subunits. It depends on Mg(2+) as a cofactor.

The protein resides in the cytoplasm. It carries out the reaction tRNA(Phe) + L-phenylalanine + ATP = L-phenylalanyl-tRNA(Phe) + AMP + diphosphate + H(+). This chain is Phenylalanine--tRNA ligase beta subunit (pheT), found in Escherichia coli (strain K12).